Consider the following 327-residue polypeptide: Malate dehydrogenase (327 aa).

Gly12–Gly18 is an NAD(+) binding site. Residues Arg93 and Arg99 each coordinate substrate. NAD(+)-binding positions include Asn106, Gln113, and Val130–Asn132. The substrate site is built by Asn132 and Arg163. His188 serves as the catalytic Proton acceptor.

It belongs to the LDH/MDH superfamily. MDH type 2 family.

It carries out the reaction (S)-malate + NAD(+) = oxaloacetate + NADH + H(+). Its function is as follows. Catalyzes the reversible oxidation of malate to oxaloacetate. In Cupriavidus metallidurans (strain ATCC 43123 / DSM 2839 / NBRC 102507 / CH34) (Ralstonia metallidurans), this protein is Malate dehydrogenase.